The following is a 205-amino-acid chain: SCO2-like protein RP587 (205 aa).

Cu cation-binding residues include C82, C86, and H172.

This sequence belongs to the SCO1/2 family.

In Rickettsia prowazekii (strain Madrid E), this protein is SCO2-like protein RP587.